The following is a 251-amino-acid chain: Aspartate/glutamate leucyltransferase (251 aa).

This sequence belongs to the R-transferase family. Bpt subfamily.

The protein resides in the cytoplasm. The enzyme catalyses N-terminal L-glutamyl-[protein] + L-leucyl-tRNA(Leu) = N-terminal L-leucyl-L-glutamyl-[protein] + tRNA(Leu) + H(+). The catalysed reaction is N-terminal L-aspartyl-[protein] + L-leucyl-tRNA(Leu) = N-terminal L-leucyl-L-aspartyl-[protein] + tRNA(Leu) + H(+). In terms of biological role, functions in the N-end rule pathway of protein degradation where it conjugates Leu from its aminoacyl-tRNA to the N-termini of proteins containing an N-terminal aspartate or glutamate. In Xanthomonas euvesicatoria pv. vesicatoria (strain 85-10) (Xanthomonas campestris pv. vesicatoria), this protein is Aspartate/glutamate leucyltransferase.